The chain runs to 379 residues: Demethylspheroidene O-methyltransferase (379 aa).

Positions 235 and 279 each coordinate S-adenosyl-L-methionine.

It belongs to the class I-like SAM-binding methyltransferase superfamily. Cation-independent O-methyltransferase family.

The enzyme catalyses demethylspheroidene + S-adenosyl-L-methionine = spheroidene + S-adenosyl-L-homocysteine + H(+). The protein operates within carotenoid biosynthesis; spheroidene biosynthesis. Its function is as follows. Methyltransferase that mediates the O-methylation of 1-hydroxy carotenoids. Converts hydroxyneurosporene to methoxyneurosporene or demethylspheroidene to spheroidene. Also able to produce spirilloxanthin. The polypeptide is Demethylspheroidene O-methyltransferase (crtF) (Cereibacter sphaeroides (strain ATCC 17023 / DSM 158 / JCM 6121 / CCUG 31486 / LMG 2827 / NBRC 12203 / NCIMB 8253 / ATH 2.4.1.) (Rhodobacter sphaeroides)).